Reading from the N-terminus, the 297-residue chain is Lipoyl synthase (297 aa).

[4Fe-4S] cluster-binding residues include cysteine 40, cysteine 45, cysteine 51, cysteine 67, cysteine 71, cysteine 74, and serine 280. The 217-residue stretch at 53–269 (AVRKTATFMI…KEIALSKGFS (217 aa)) folds into the Radical SAM core domain.

This sequence belongs to the radical SAM superfamily. Lipoyl synthase family. [4Fe-4S] cluster serves as cofactor.

The protein resides in the cytoplasm. It carries out the reaction [[Fe-S] cluster scaffold protein carrying a second [4Fe-4S](2+) cluster] + N(6)-octanoyl-L-lysyl-[protein] + 2 oxidized [2Fe-2S]-[ferredoxin] + 2 S-adenosyl-L-methionine + 4 H(+) = [[Fe-S] cluster scaffold protein] + N(6)-[(R)-dihydrolipoyl]-L-lysyl-[protein] + 4 Fe(3+) + 2 hydrogen sulfide + 2 5'-deoxyadenosine + 2 L-methionine + 2 reduced [2Fe-2S]-[ferredoxin]. Its pathway is protein modification; protein lipoylation via endogenous pathway; protein N(6)-(lipoyl)lysine from octanoyl-[acyl-carrier-protein]. Functionally, catalyzes the radical-mediated insertion of two sulfur atoms into the C-6 and C-8 positions of the octanoyl moiety bound to the lipoyl domains of lipoate-dependent enzymes, thereby converting the octanoylated domains into lipoylated derivatives. This chain is Lipoyl synthase, found in Bacillus cereus (strain ATCC 14579 / DSM 31 / CCUG 7414 / JCM 2152 / NBRC 15305 / NCIMB 9373 / NCTC 2599 / NRRL B-3711).